We begin with the raw amino-acid sequence, 629 residues long: LEAF RUST 10 DISEASE-RESISTANCE LOCUS RECEPTOR-LIKE PROTEIN KINASE-like 1.1 (629 aa).

Positions 1-19 (METVSVLLFFFLFLLAAEA) are cleaved as a signal peptide. Residues 20–225 (RSTKRTGCKD…PNNYHAEMRL (206 aa)) are Extracellular-facing. N-linked (GlcNAc...) asparagine glycans are attached at residues Asn56, Asn92, Asn123, Asn124, Asn172, and Asn177. A helical membrane pass occupies residues 226–246 (GLGIGGSVILIIILVALFAVI). Over 247–629 (HRNYRRKDGS…TTPNTSAYEF (383 aa)) the chain is Cytoplasmic. The region spanning 291–565 (FSKDRLLGDG…TMEQVVHELK (275 aa)) is the Protein kinase domain. Residues 297–305 (LGDGGFGTV) and Lys319 each bind ATP. Phosphotyrosine is present on Tyr365. Asp416 serves as the catalytic Proton acceptor. Ser449 carries the phosphoserine modification. 2 positions are modified to phosphothreonine: Thr450 and Thr455. Tyr463 carries the post-translational modification Phosphotyrosine. The interval 609–629 (VSVTDQWTSKSTTPNTSAYEF) is disordered.

Belongs to the protein kinase superfamily. Ser/Thr protein kinase family.

The protein localises to the cell membrane. The enzyme catalyses L-seryl-[protein] + ATP = O-phospho-L-seryl-[protein] + ADP + H(+). It carries out the reaction L-threonyl-[protein] + ATP = O-phospho-L-threonyl-[protein] + ADP + H(+). The polypeptide is LEAF RUST 10 DISEASE-RESISTANCE LOCUS RECEPTOR-LIKE PROTEIN KINASE-like 1.1 (Arabidopsis thaliana (Mouse-ear cress)).